The primary structure comprises 109 residues: Spermidine export protein MdtI (109 aa).

The next 4 helical transmembrane spans lie at 6–26 (WIHA…NVFL), 36–56 (VYGI…SQAV), 64–84 (AYAL…WVLF), and 88–108 (LNNK…LIKL).

It belongs to the drug/metabolite transporter (DMT) superfamily. Small multidrug resistance (SMR) (TC 2.A.7.1) family. MdtI subfamily. Forms a complex with MdtJ.

It is found in the cell inner membrane. In terms of biological role, catalyzes the excretion of spermidine. The chain is Spermidine export protein MdtI from Klebsiella pneumoniae (strain 342).